The primary structure comprises 159 residues: Urease accessory protein UreE (159 aa).

It belongs to the UreE family.

It localises to the cytoplasm. Involved in urease metallocenter assembly. Binds nickel. Probably functions as a nickel donor during metallocenter assembly. The polypeptide is Urease accessory protein UreE (Pseudomonas entomophila (strain L48)).